Here is a 197-residue protein sequence, read N- to C-terminus: MKKRRSKKERQELLQQTIETNPFITDEDLAEKFQVSIQTVRLDRMELSIPELRERIKHVATKQHEEDVKSLPLEEVVGEIIDIELDRHAISIFEVKVEHVFKRNQIARGHHLFAQANSLAVAVIDEELALTAKSTIRYIRPVKLGERVVAKARVEDVENDKGRTVVKVRSFVGEELVFTGTFEMYRSSNYSEEGNNL.

Belongs to the FapR family.

Transcriptional factor involved in regulation of membrane lipid biosynthesis by repressing genes involved in fatty acid and phospholipid metabolism. This chain is Transcription factor FapR, found in Bacillus anthracis (strain A0248).